A 368-amino-acid polypeptide reads, in one-letter code: Cell division protein FtsZ 1 (368 aa).

GTP contacts are provided by residues 52 to 56 (GGGCN), 139 to 141 (GTG), Glu170, Arg174, and Asp217.

This sequence belongs to the FtsZ family. As to quaternary structure, homodimer. Polymerizes to form a dynamic ring structure in a strictly GTP-dependent manner. Interacts directly with several other division proteins.

The protein localises to the cytoplasm. Functionally, essential cell division protein that forms a contractile ring structure (Z ring) at the future cell division site. The regulation of the ring assembly controls the timing and the location of cell division. One of the functions of the FtsZ ring is to recruit other cell division proteins to the septum to produce a new cell wall between the dividing cells. Binds GTP and shows GTPase activity. This is Cell division protein FtsZ 1 from Archaeoglobus fulgidus (strain ATCC 49558 / DSM 4304 / JCM 9628 / NBRC 100126 / VC-16).